Here is a 316-residue protein sequence, read N- to C-terminus: Putative ring-cleaving dioxygenase MhqA (316 aa).

VOC domains lie at 5–131 (GIHH…LTAD) and 154–278 (GLGP…LSTD). Fe cation contacts are provided by histidine 8, histidine 226, and glutamate 274.

It belongs to the extradiol ring-cleavage dioxygenase family. Fe(2+) is required as a cofactor.

It localises to the cytoplasm. Putative ring-cleavage dioxygenase that may contribute to the degradation of aromatic compounds. The sequence is that of Putative ring-cleaving dioxygenase MhqA (mhqA) from Bacillus subtilis (strain 168).